We begin with the raw amino-acid sequence, 218 residues long: Pyrrolidone-carboxylate peptidase 2 (218 aa).

Residues Glu83, Cys146, and His170 contribute to the active site.

Belongs to the peptidase C15 family. In terms of assembly, homotetramer.

It localises to the cytoplasm. The catalysed reaction is Release of an N-terminal pyroglutamyl group from a polypeptide, the second amino acid generally not being Pro.. In terms of biological role, removes 5-oxoproline from various penultimate amino acid residues except L-proline. This chain is Pyrrolidone-carboxylate peptidase 2, found in Photorhabdus laumondii subsp. laumondii (strain DSM 15139 / CIP 105565 / TT01) (Photorhabdus luminescens subsp. laumondii).